The chain runs to 341 residues: Hyaluronidase A (341 aa).

3 N-linked (GlcNAc...) asparagine glycosylation sites follow: N3, N68, and N83. 2 cysteine pairs are disulfide-bonded: C23/C311 and C189/C201.

The protein belongs to the glycosyl hydrolase 56 family. In terms of tissue distribution, expressed by the venom gland.

Its subcellular location is the secreted. The enzyme catalyses Random hydrolysis of (1-&gt;4)-linkages between N-acetyl-beta-D-glucosamine and D-glucuronate residues in hyaluronate.. In terms of biological role, may hydrolyze high molecular weight hyaluronic acid to produce small oligosaccharides. This Vespa velutina (Asian yellow-legged hornet) protein is Hyaluronidase A.